The following is a 235-amino-acid chain: MRFQTELVPARLTRRYKRFLADCVLDADGAEITAHCANPGSMMGLAAPGTRIWLEPNDDPKKKLKFGWRLVDHENGHFTGVDTSLPNRVLKEALVARHVETLSGYGTVRPEVKYGQNSRIDFLLSEDGLPDAYVEVKSVTLSRQTGQAEFPDSVTARGAKHLQELADMAQAGHRAIMLYLVQRTDCTSFTLAGDIDPTYAAAFRSARDRGVETLCLGTNITPQGIEVAGAIPIRL.

It belongs to the SfsA family.

The sequence is that of Sugar fermentation stimulation protein homolog from Roseobacter denitrificans (strain ATCC 33942 / OCh 114) (Erythrobacter sp. (strain OCh 114)).